Consider the following 329-residue polypeptide: tRNA N6-adenosine threonylcarbamoyltransferase (329 aa).

Residues histidine 110 and histidine 114 each coordinate Fe cation. Residues 132 to 136 (VISGG), aspartate 165, glycine 178, and asparagine 271 contribute to the substrate site. A Fe cation-binding site is contributed by aspartate 299.

Belongs to the KAE1 / TsaD family. The cofactor is Fe(2+).

The protein localises to the cytoplasm. The catalysed reaction is L-threonylcarbamoyladenylate + adenosine(37) in tRNA = N(6)-L-threonylcarbamoyladenosine(37) in tRNA + AMP + H(+). In terms of biological role, required for the formation of a threonylcarbamoyl group on adenosine at position 37 (t(6)A37) in tRNAs that read codons beginning with adenine. Is involved in the transfer of the threonylcarbamoyl moiety of threonylcarbamoyl-AMP (TC-AMP) to the N6 group of A37, together with TsaE and TsaB. TsaD likely plays a direct catalytic role in this reaction. This chain is tRNA N6-adenosine threonylcarbamoyltransferase, found in Neorickettsia sennetsu (strain ATCC VR-367 / Miyayama) (Ehrlichia sennetsu).